Consider the following 775-residue polypeptide: MSFDRPEIYSAPVLQGESPNDDDNTEIIKSFKNFILEFRLDSQFIYRDQLRNNILVKNYSLTVNMEHLIGYNEDIYKKLSDEPSDIIPLFETAITQVAKRISILSRAQSANNNDKDPENTSMDTDSLLLNSLPTFQLILNSNANQIPLRDLDSEHVSKIVRLSGIIISTSVLSSRATYLSIMCRNCRHTTSITINNFNSITGNTVSLPRSCLSTIESESSMANESNIGDESTKKNCGPDPYIIIHESSKFIDQQFLKLQEIPELVPVGEMPRNLTMTCDRYLTNKVIPGTRVTIVGIYSIYNSKNGAGSGRSGGGNGGSGVAIRTPYIKILGIQSDVETSSIWNSVTMFTEEEEEEFLQLSRNPKLYEILTNSIAPSIFGNEDIKKAIVCLLMGGSKKILPDGMRLRGDINVLLLGDPGTAKSQLLKFVEKVSPIAVYTSGKGSSAAGLTASVQRDPMTREFYLEGGAMVLADGGVVCIDEFDKMRDEDRVAIHEAMEQQTISIAKAGITTVLNSRTSVLAAANPIYGRYDDLKSPGDNIDFQTTILSRFDMIFIVKDDHNEERDISIANHVINIHTGNANAMQNQQEENGSEISIEKMKRYITYCRLKCAPRLSPQAAEKLSSNFVTIRKQLLINELESTERSSIPITIRQLEAIIRITESLAKLELSPIAQERHVDEAIRLFQASTMDAASQDPIGGLNQASGTSLSEIRRFEQELKRRLPIGWSTSYQTLRREFVDTHRFSQLALDKALYALEKHETIQLRHQGQNIYRSGV.

The interval 1–22 (MSFDRPEIYSAPVLQGESPNDD) is disordered. The MCM domain maps to 366-573 (LYEILTNSIA…RDISIANHVI (208 aa)). 416 to 423 (GDPGTAKS) provides a ligand contact to ATP. Positions 548-551 (SRFD) match the Arginine finger motif.

This sequence belongs to the MCM family. As to quaternary structure, component of the MCM2-7 complex. The complex forms a toroidal hexameric ring with the proposed subunit order MCM2-MCM6-MCM4-MCM7-MCM3-MCM5; loaded onto DNA, forms a head-head double hexamer. Interacts with CSM1.

Its subcellular location is the nucleus. The enzyme catalyses ATP + H2O = ADP + phosphate + H(+). Functionally, acts as a component of the MCM2-7 complex (MCM complex) which is the putative replicative helicase essential for 'once per cell cycle' DNA replication initiation and elongation in eukaryotic cells. The active ATPase sites in the MCM2-7 ring are formed through the interaction surfaces of two neighboring subunits such that a critical structure of a conserved arginine finger motif is provided in trans relative to the ATP-binding site of the Walker A box of the adjacent subunit. The six ATPase active sites, however, are likely to contribute differentially to the complex helicase activity; specifically the MCM2-MCM5 association is proposed to be reversible and to mediate a open ring conformation which may facilitate DNA loading. Once loaded onto DNA, double hexamers can slide on dsDNA in the absence of ATPase activity. The polypeptide is Minichromosome maintenance protein 5 (MCM5) (Saccharomyces cerevisiae (strain ATCC 204508 / S288c) (Baker's yeast)).